Reading from the N-terminus, the 467-residue chain is Glutamate--tRNA ligase (467 aa).

The 'HIGH' region signature appears at P10–G20. Zn(2+) is bound by residues C99, C101, C126, and E128. The 'KMSKS' region motif lies at R237–R241. An ATP-binding site is contributed by K240.

It belongs to the class-I aminoacyl-tRNA synthetase family. Glutamate--tRNA ligase type 1 subfamily. As to quaternary structure, monomer. Zn(2+) serves as cofactor.

It is found in the cytoplasm. It carries out the reaction tRNA(Glu) + L-glutamate + ATP = L-glutamyl-tRNA(Glu) + AMP + diphosphate. Its function is as follows. Catalyzes the attachment of glutamate to tRNA(Glu) in a two-step reaction: glutamate is first activated by ATP to form Glu-AMP and then transferred to the acceptor end of tRNA(Glu). This is Glutamate--tRNA ligase from Geotalea uraniireducens (strain Rf4) (Geobacter uraniireducens).